The chain runs to 471 residues: 3-isopropylmalate dehydratase large subunit (471 aa).

Residues Cys347, Cys407, and Cys410 each coordinate [4Fe-4S] cluster.

This sequence belongs to the aconitase/IPM isomerase family. LeuC type 1 subfamily. As to quaternary structure, heterodimer of LeuC and LeuD. [4Fe-4S] cluster serves as cofactor.

The catalysed reaction is (2R,3S)-3-isopropylmalate = (2S)-2-isopropylmalate. It participates in amino-acid biosynthesis; L-leucine biosynthesis; L-leucine from 3-methyl-2-oxobutanoate: step 2/4. Catalyzes the isomerization between 2-isopropylmalate and 3-isopropylmalate, via the formation of 2-isopropylmaleate. In Edwardsiella ictaluri (strain 93-146), this protein is 3-isopropylmalate dehydratase large subunit.